Consider the following 652-residue polypeptide: Chaperone protein HtpG (652 aa).

Residues 1–348 (MATDAHKETL…SDDLPLNVSR (348 aa)) are a; substrate-binding. The tract at residues 349–565 (ELLQHNPLLD…EYDFGMGMQR (217 aa)) is b. The tract at residues 566–652 (LLKAAGHAMP…EAKSNAARGD (87 aa)) is c.

It belongs to the heat shock protein 90 family. In terms of assembly, homodimer.

The protein localises to the cytoplasm. Molecular chaperone. Has ATPase activity. In Alkalilimnicola ehrlichii (strain ATCC BAA-1101 / DSM 17681 / MLHE-1), this protein is Chaperone protein HtpG.